Here is a 444-residue protein sequence, read N- to C-terminus: Ribosomal protein uS12 methylthiotransferase RimO (444 aa).

One can recognise an MTTase N-terminal domain in the interval 2 to 118 (LKIALESLGC…IDKILKELSE (117 aa)). 6 residues coordinate [4Fe-4S] cluster: C11, C47, C81, C155, C159, and C162. The region spanning 141–371 (STPSYMAYLK…MMIQQKISEE (231 aa)) is the Radical SAM core domain. Residues 374 to 441 (DKKIGKTYEV…EYDLMGDVLY (68 aa)) enclose the TRAM domain.

The protein belongs to the methylthiotransferase family. RimO subfamily. [4Fe-4S] cluster serves as cofactor.

It is found in the cytoplasm. It carries out the reaction L-aspartate(89)-[ribosomal protein uS12]-hydrogen + (sulfur carrier)-SH + AH2 + 2 S-adenosyl-L-methionine = 3-methylsulfanyl-L-aspartate(89)-[ribosomal protein uS12]-hydrogen + (sulfur carrier)-H + 5'-deoxyadenosine + L-methionine + A + S-adenosyl-L-homocysteine + 2 H(+). Functionally, catalyzes the methylthiolation of an aspartic acid residue of ribosomal protein uS12. The protein is Ribosomal protein uS12 methylthiotransferase RimO of Clostridioides difficile (strain 630) (Peptoclostridium difficile).